A 305-amino-acid chain; its full sequence is Oxidoreductase swnR (305 aa).

It belongs to the NmrA-type oxidoreductase family. Isoflavone reductase subfamily.

It carries out the reaction L-pipecolate + O2 = L-1-piperideine-6-carboxylate + H2O2 + H(+). It participates in mycotoxin biosynthesis. Oxidoreductase; part of the gene cluster that mediates the biosynthesis of swainsonine (SW), a cytotoxic fungal alkaloid and a potential cancer therapy drug. Swainsonine production occurs via a multibranched pathway and is dispensable for fungal colonization of plants and infection of insect hosts. The first step of swainsonine biosynthesis is the production of the precursor pipecolic acid (PA) via conversion of L-lysine (Lys) to 1-piperideine-6-carboxylate (P6C) by the aminotransferase swnA, the latter being further reduced to PA by the reductase swnR. The PKS-NRPS hybrid synthetase swnK uptakes and condensates PA and malonyl-CoA with and without skipping of the ketoreductase (KR) domain in order to produce 3 intermediates, 1-oxoindolizidine, (1S)-1-hydroxyindolizin, and (1R)-1-hydroxyindolizine; with the transisomer (1S)-1-hydroxyindolizin being predominant. The terminal thioester reductase (TE) domain of swnK is involved in reduction of the thioester bond to release the intermediate aldehydes. The oxidoreductase swnN could contribute to the reduction of 1-oxoindolizidine to (1S)-1-hydroxyindolizin and (1R)-1-hydroxyindolizine, contributing to the major route of SW production. The dioxygenase swnH2 would be responsible for the oxidization of (1R)-1-hydroxyindolizine into (1R,2S)-1,2-dihydroxyindolizine and of (1S)-1-hydroxyindolizin to yield both (1R,2S)-1,2-dihydroxyindolizine and (1S,2S)-1,2-dihydroxyindolizine. The dioxygenase swnH1 then performs the conversion of the 1,2-dihydroxyindolizine epimers to SW. The chain is Oxidoreductase swnR from Arthroderma benhamiae (strain ATCC MYA-4681 / CBS 112371) (Trichophyton mentagrophytes).